A 505-amino-acid chain; its full sequence is MAQIDFRKKINWHRRYRSPQGVKTEHEILRIFESDRGRIINSPAIRRLQQKTQVFPLERNAAVRTRLTHSMEVQQVGRYIAKEILSRLKELKLLEAYGLDELTGPFESIVEMSCLMHDIGNPPFGHFGEAAINDWFRQRLYPEDAESQPLTDDRCSVAALRLRDGEEPLNALRRKIRQDLCHFEGNAQGIRLVHTLMRMNLTWAQVGGILKYTRPAWWRGETPETHHYLMKKPGYYLSEEAYIARLRKELNLALYSRFPLTWIMEAADDISYCVADLEDAVEKRIFTVEQLYHHLHEAWGQHEKGSLFSLVVENAWEKSRSNSLSRSTEDQFFMYLRVNTLNKLVPYAAQRFIDNLPAIFAGTFNHALLEDASECSDLLKLYKNVAVKHVFSHPDVEQLELQGYRVISGLLEIYRPLLNLPLSDFTELVEKERVKRFPIETRLFHKLSTRHRLAYVEAVSKLPSDSPEFPLWEYYYRCRLLQDYISGMTDLYAWDEYRRLMAVEQ.

The 208-residue stretch at 66-273 folds into the HD domain; the sequence is RLTHSMEVQQ…MEAADDISYC (208 aa).

It belongs to the dGTPase family. Type 1 subfamily. Homotetramer. Mg(2+) is required as a cofactor.

The catalysed reaction is dGTP + H2O = 2'-deoxyguanosine + triphosphate + H(+). Its function is as follows. dGTPase preferentially hydrolyzes dGTP over the other canonical NTPs. The protein is Deoxyguanosinetriphosphate triphosphohydrolase of Escherichia coli O81 (strain ED1a).